We begin with the raw amino-acid sequence, 134 residues long: Small ribosomal subunit protein bS6 (134 aa).

A disordered region spans residues 100-134 (SFLARDETDRRERSEETAEGEGEPDHSANEAVVTA). The segment covering 103-115 (ARDETDRRERSEE) has biased composition (basic and acidic residues).

It belongs to the bacterial ribosomal protein bS6 family.

In terms of biological role, binds together with bS18 to 16S ribosomal RNA. In Acidithiobacillus ferrooxidans (strain ATCC 23270 / DSM 14882 / CIP 104768 / NCIMB 8455) (Ferrobacillus ferrooxidans (strain ATCC 23270)), this protein is Small ribosomal subunit protein bS6.